Consider the following 202-residue polypeptide: Imidazoleglycerol-phosphate dehydratase (202 aa).

The protein belongs to the imidazoleglycerol-phosphate dehydratase family.

The protein localises to the cytoplasm. It carries out the reaction D-erythro-1-(imidazol-4-yl)glycerol 3-phosphate = 3-(imidazol-4-yl)-2-oxopropyl phosphate + H2O. The protein operates within amino-acid biosynthesis; L-histidine biosynthesis; L-histidine from 5-phospho-alpha-D-ribose 1-diphosphate: step 6/9. This Synechococcus sp. (strain WH7803) protein is Imidazoleglycerol-phosphate dehydratase.